The following is a 290-amino-acid chain: MAISNTNLLQTKKPISLPLLAFITLFLMLLNRVNSSDSLSFTFDNFRPDQRDLILQGDAKISSGGDSLQLTKTDTSGKPVRGSVGRALYYTPLHLWDSSTNRLASFQTTFTFVLSSPTNNPGDGIAFFIAPPETTIPPGSSGGLLGLFSPDNALNNSLNQIVAVEFDTFVNNNWDPSHRHIGIDVNTIKSSATVRWQRENGSLATAQISYNSDTKKLSVVSSYPNTQANEDYTVSYDVDLKTELPEWVRVGFSGSTGGYVQNHNILSWTFNSNLQSSRAKKEDIYIKRYV.

The first 35 residues, 1 to 35 (MAISNTNLLQTKKPISLPLLAFITLFLMLLNRVNS), serve as a signal peptide directing secretion. Residue asparagine 155 is glycosylated (N-linked (GlcNAc...) asparagine). Mn(2+) is bound by residues glutamate 165 and aspartate 167. Residues aspartate 167, asparagine 171, and aspartate 175 each coordinate Ca(2+). Mn(2+)-binding residues include aspartate 175 and histidine 180. N-linked (GlcNAc...) asparagine glycosylation is present at asparagine 200.

The protein belongs to the leguminous lectin family. In terms of assembly, homotetramer.

In terms of biological role, mannose/glucose binding bark lectin. Functionally, bark lectins are storage proteins that probably maintain stocks of nitrogen during dormant period. Self-aggregatable molecules that can bind their own carbohydrate side chains. They could also play a role in the plant's defense against phytophagous invertebrates or herbivorous higher animals. The polypeptide is Agglutinin-2 (Cladrastis kentukea (Yellow wood)).